The chain runs to 210 residues: Thymidylate kinase (210 aa).

Position 10–17 (10–17) interacts with ATP; sequence GPEGAGKS.

The protein belongs to the thymidylate kinase family.

The enzyme catalyses dTMP + ATP = dTDP + ADP. Functionally, phosphorylation of dTMP to form dTDP in both de novo and salvage pathways of dTTP synthesis. This chain is Thymidylate kinase, found in Pseudomonas paraeruginosa (strain DSM 24068 / PA7) (Pseudomonas aeruginosa (strain PA7)).